Reading from the N-terminus, the 171-residue chain is 3-hydroxydecanoyl-[acyl-carrier-protein] dehydratase (171 aa).

The active site involves histidine 70.

It belongs to the thioester dehydratase family. FabA subfamily. In terms of assembly, homodimer.

The protein localises to the cytoplasm. It catalyses the reaction a (3R)-hydroxyacyl-[ACP] = a (2E)-enoyl-[ACP] + H2O. It carries out the reaction (3R)-hydroxydecanoyl-[ACP] = (2E)-decenoyl-[ACP] + H2O. The enzyme catalyses (2E)-decenoyl-[ACP] = (3Z)-decenoyl-[ACP]. The protein operates within lipid metabolism; fatty acid biosynthesis. Its function is as follows. Necessary for the introduction of cis unsaturation into fatty acids. Catalyzes the dehydration of (3R)-3-hydroxydecanoyl-ACP to E-(2)-decenoyl-ACP and then its isomerization to Z-(3)-decenoyl-ACP. Can catalyze the dehydratase reaction for beta-hydroxyacyl-ACPs with saturated chain lengths up to 16:0, being most active on intermediate chain length. The protein is 3-hydroxydecanoyl-[acyl-carrier-protein] dehydratase of Methylobacillus flagellatus (strain ATCC 51484 / DSM 6875 / VKM B-1610 / KT).